Here is a 445-residue protein sequence, read N- to C-terminus: tRNA-2-methylthio-N(6)-dimethylallyladenosine synthase (445 aa).

Residues 3–124 (KKLYIKTYGC…LPELISKVVR (122 aa)) form the MTTase N-terminal domain. Positions 12, 48, 87, 162, 166, and 169 each coordinate [4Fe-4S] cluster. One can recognise a Radical SAM core domain in the interval 148 to 380 (YPQGASSFIS…QQELTAQQLA (233 aa)). A TRAM domain is found at 383 to 445 (ESCVGSIMKV…ASNSLTGEVI (63 aa)).

It belongs to the methylthiotransferase family. MiaB subfamily. As to quaternary structure, monomer. Requires [4Fe-4S] cluster as cofactor.

Its subcellular location is the cytoplasm. The enzyme catalyses N(6)-dimethylallyladenosine(37) in tRNA + (sulfur carrier)-SH + AH2 + 2 S-adenosyl-L-methionine = 2-methylsulfanyl-N(6)-dimethylallyladenosine(37) in tRNA + (sulfur carrier)-H + 5'-deoxyadenosine + L-methionine + A + S-adenosyl-L-homocysteine + 2 H(+). Catalyzes the methylthiolation of N6-(dimethylallyl)adenosine (i(6)A), leading to the formation of 2-methylthio-N6-(dimethylallyl)adenosine (ms(2)i(6)A) at position 37 in tRNAs that read codons beginning with uridine. In Rickettsia felis (strain ATCC VR-1525 / URRWXCal2) (Rickettsia azadi), this protein is tRNA-2-methylthio-N(6)-dimethylallyladenosine synthase.